The following is a 424-amino-acid chain: Glutamate-1-semialdehyde 2,1-aminomutase (424 aa).

Lysine 263 is subject to N6-(pyridoxal phosphate)lysine.

It belongs to the class-III pyridoxal-phosphate-dependent aminotransferase family. HemL subfamily. As to quaternary structure, homodimer. It depends on pyridoxal 5'-phosphate as a cofactor.

It localises to the cytoplasm. It catalyses the reaction (S)-4-amino-5-oxopentanoate = 5-aminolevulinate. It participates in porphyrin-containing compound metabolism; protoporphyrin-IX biosynthesis; 5-aminolevulinate from L-glutamyl-tRNA(Glu): step 2/2. This chain is Glutamate-1-semialdehyde 2,1-aminomutase, found in Campylobacter jejuni subsp. doylei (strain ATCC BAA-1458 / RM4099 / 269.97).